Consider the following 104-residue polypeptide: Large ribosomal subunit protein bL21 (104 aa).

The protein belongs to the bacterial ribosomal protein bL21 family. As to quaternary structure, part of the 50S ribosomal subunit. Contacts protein L20.

Its function is as follows. This protein binds to 23S rRNA in the presence of protein L20. This is Large ribosomal subunit protein bL21 from Streptococcus pneumoniae serotype 2 (strain D39 / NCTC 7466).